The sequence spans 121 residues: MQKSRNYYRKAKHVRILKKLKSNREDKQKYRIGIYKSLRNFYAYIFDPWKNKVITSVSTLDKSNGYKGNIVSASSLAPDLYKKMKKLNLENESYIFDRGGYLFHGRVKAFANALRDQGVKF.

This sequence belongs to the universal ribosomal protein uL18 family. Part of the 50S ribosomal subunit; part of the 5S rRNA/L5/L18/L25 subcomplex. Contacts the 5S and 23S rRNAs.

Functionally, this is one of the proteins that bind and probably mediate the attachment of the 5S RNA into the large ribosomal subunit, where it forms part of the central protuberance. The polypeptide is Large ribosomal subunit protein uL18 (Mesomycoplasma hyopneumoniae (strain J / ATCC 25934 / NCTC 10110) (Mycoplasma hyopneumoniae)).